The chain runs to 65 residues: Defensin-B3 (65 aa).

Residues 1–21 (MRLLLVFFFLSLLDQAPPARS) form the signal peptide. Cystine bridges form between Cys-29/Cys-58, Cys-36/Cys-50, and Cys-40/Cys-59. Residues 62 to 65 (ESPR) constitute a propeptide that is removed on maturation.

It belongs to the beta-defensin family. Lowly expressed in spleen, and expressed at lower levels in kidney, lung and testis.

The protein resides in the secreted. In terms of biological role, has antimicrobial activity. In Ornithorhynchus anatinus (Duckbill platypus), this protein is Defensin-B3.